Here is a 151-residue protein sequence, read N- to C-terminus: Putative phosphatidylglycerol/phosphatidylinositol transfer protein 3 (151 aa).

An N-terminal signal peptide occupies residues 1 to 26; it reads MKYSQNQIVYVIFFFIILIVVKPIES.

This sequence belongs to the NPC2 family. In terms of assembly, monomer.

Catalyzes the intermembrane transfer of phosphatidylglycerol and phosphatidylinositol. This Dictyostelium discoideum (Social amoeba) protein is Putative phosphatidylglycerol/phosphatidylinositol transfer protein 3.